Consider the following 694-residue polypeptide: DNA ligase (694 aa).

Residues 41-45 (DAEFD), 91-92 (SL), and E121 contribute to the NAD(+) site. The active-site N6-AMP-lysine intermediate is the K123. Residues R144, E184, K300, and K324 each coordinate NAD(+). The Zn(2+) site is built by C418, C421, C437, and C443. One can recognise a BRCT domain in the interval 607-694 (SVLPTCEGLT…QGPPVQQVVD (88 aa)).

It belongs to the NAD-dependent DNA ligase family. LigA subfamily. Mg(2+) is required as a cofactor. It depends on Mn(2+) as a cofactor.

The enzyme catalyses NAD(+) + (deoxyribonucleotide)n-3'-hydroxyl + 5'-phospho-(deoxyribonucleotide)m = (deoxyribonucleotide)n+m + AMP + beta-nicotinamide D-nucleotide.. Functionally, DNA ligase that catalyzes the formation of phosphodiester linkages between 5'-phosphoryl and 3'-hydroxyl groups in double-stranded DNA using NAD as a coenzyme and as the energy source for the reaction. It is essential for DNA replication and repair of damaged DNA. In Mycobacterium leprae (strain TN), this protein is DNA ligase.